Here is a 320-residue protein sequence, read N- to C-terminus: Small ribosomal subunit protein uS2 (320 aa).

The segment at 254–320 is disordered; the sequence is GDAAKAALPV…APATTGPVSE (67 aa). Positions 272–282 are enriched in basic and acidic residues; it reads VSAKNEAKSDD. Over residues 308–320 the composition is skewed to low complexity; sequence AEAAPATTGPVSE.

The protein belongs to the universal ribosomal protein uS2 family.

This Clavibacter sepedonicus (Clavibacter michiganensis subsp. sepedonicus) protein is Small ribosomal subunit protein uS2.